A 695-amino-acid chain; its full sequence is U1 snRNP-associated protein usp107 (695 aa).

The segment covering 85–96 has biased composition (basic and acidic residues); it reads RDNESQQKDRKN. A disordered region spans residues 85-134; that stretch reads RDNESQQKDRKNLPRNQKSNEIQEKQTFQTPSSEKSTTERESRPFVPPNS. Residues 98-113 are compositionally biased toward polar residues; it reads PRNQKSNEIQEKQTFQ. An RRM domain is found at 139 to 221; sequence RMLFIGNIPK…PSTRLSLITD (83 aa). Residues 265–369 are a coiled coil; the sequence is DVRSRIERAA…NLLSKHRISR (105 aa). Composition is skewed to basic and acidic residues over residues 487–506 and 548–561; these read EEDADALDRKEEERELRTRG and SERREFGLPERLLL. 2 disordered regions span residues 487–509 and 540–590; these read EEDADALDRKEEERELRTRGEGA and QTKK…AEKT. The 91-residue stretch at 605 to 695 folds into the PWI domain; it reads ESLWALPIDW…HVLLILRSEA (91 aa).

Component of the U1 snRNP particle, a subcomplex of the spliceosome. Interacts with prp5 and usp102.

It is found in the cytoplasm. It localises to the nucleus. Component of the U1 snRNP particle, which recognizes and binds the 5'-splice site of pre-mRNA. Together with other non-snRNP factors, U1 snRNP forms the spliceosomal commitment complex, that targets pre-mRNA to the splicing pathway. The chain is U1 snRNP-associated protein usp107 (usp107) from Schizosaccharomyces pombe (strain 972 / ATCC 24843) (Fission yeast).